The sequence spans 150 residues: uncharacterized protein (150 aa).

Residues 5–66 form the HTH asnC-type domain; it reads LDKVDRRLLE…KPNYKKLNLG (62 aa). A DNA-binding region (H-T-H motif) is located at residues 24-43; that stretch reads IATLSKKLGIPRTTVHYRIK.

This is an uncharacterized protein from Pyrococcus abyssi (strain GE5 / Orsay).